The primary structure comprises 325 residues: Probable tRNA pseudouridine synthase B (325 aa).

Aspartate 69 acts as the Nucleophile in catalysis. Residues 236 to 311 (LPKIVIKDSA…IAADIQRVMM (76 aa)) form the PUA domain.

It belongs to the pseudouridine synthase TruB family. Type 2 subfamily.

The enzyme catalyses uridine(55) in tRNA = pseudouridine(55) in tRNA. In terms of biological role, could be responsible for synthesis of pseudouridine from uracil-55 in the psi GC loop of transfer RNAs. This Archaeoglobus fulgidus (strain ATCC 49558 / DSM 4304 / JCM 9628 / NBRC 100126 / VC-16) protein is Probable tRNA pseudouridine synthase B.